A 183-amino-acid polypeptide reads, in one-letter code: Shikimate kinase (183 aa).

25–30 (GAGKTT) is a binding site for ATP. Thr29 lines the Mg(2+) pocket. Positions 47, 71, and 93 each coordinate substrate. An ATP-binding site is contributed by Arg131. Arg150 serves as a coordination point for substrate.

This sequence belongs to the shikimate kinase family. In terms of assembly, monomer. Mg(2+) is required as a cofactor.

The protein resides in the cytoplasm. It catalyses the reaction shikimate + ATP = 3-phosphoshikimate + ADP + H(+). It functions in the pathway metabolic intermediate biosynthesis; chorismate biosynthesis; chorismate from D-erythrose 4-phosphate and phosphoenolpyruvate: step 5/7. Catalyzes the specific phosphorylation of the 3-hydroxyl group of shikimic acid using ATP as a cosubstrate. This chain is Shikimate kinase, found in Dechloromonas aromatica (strain RCB).